Here is a 483-residue protein sequence, read N- to C-terminus: tRNA sulfurtransferase (483 aa).

In terms of domain architecture, THUMP spans 63–167 (GQLIDMLART…DDQVYLVTKK (105 aa)). ATP is bound by residues 185-186 (LI), lysine 267, glycine 289, and glutamine 298. Cysteines 346 and 457 form a disulfide. The Rhodanese domain occupies 405-483 (LPVSAKVIDI…GYTNVGVYRP (79 aa)). Cysteine 457 acts as the Cysteine persulfide intermediate in catalysis.

It belongs to the ThiI family.

It localises to the cytoplasm. The enzyme catalyses [ThiI sulfur-carrier protein]-S-sulfanyl-L-cysteine + a uridine in tRNA + 2 reduced [2Fe-2S]-[ferredoxin] + ATP + H(+) = [ThiI sulfur-carrier protein]-L-cysteine + a 4-thiouridine in tRNA + 2 oxidized [2Fe-2S]-[ferredoxin] + AMP + diphosphate. It catalyses the reaction [ThiS sulfur-carrier protein]-C-terminal Gly-Gly-AMP + S-sulfanyl-L-cysteinyl-[cysteine desulfurase] + AH2 = [ThiS sulfur-carrier protein]-C-terminal-Gly-aminoethanethioate + L-cysteinyl-[cysteine desulfurase] + A + AMP + 2 H(+). It participates in cofactor biosynthesis; thiamine diphosphate biosynthesis. Functionally, catalyzes the ATP-dependent transfer of a sulfur to tRNA to produce 4-thiouridine in position 8 of tRNAs, which functions as a near-UV photosensor. Also catalyzes the transfer of sulfur to the sulfur carrier protein ThiS, forming ThiS-thiocarboxylate. This is a step in the synthesis of thiazole, in the thiamine biosynthesis pathway. The sulfur is donated as persulfide by IscS. The polypeptide is tRNA sulfurtransferase (Saccharophagus degradans (strain 2-40 / ATCC 43961 / DSM 17024)).